The sequence spans 109 residues: DNA-binding protein Mpal_0536 (109 aa).

A disordered region spans residues 14-35; it reads MAQLQSQQMDQQQMDEEKQRAK. Over residues 16 to 25 the composition is skewed to low complexity; sequence QLQSQQMDQQ.

This sequence belongs to the PDCD5 family.

The polypeptide is DNA-binding protein Mpal_0536 (Methanosphaerula palustris (strain ATCC BAA-1556 / DSM 19958 / E1-9c)).